A 250-amino-acid polypeptide reads, in one-letter code: 3-deoxy-manno-octulosonate cytidylyltransferase (250 aa).

Belongs to the KdsB family.

It localises to the cytoplasm. It carries out the reaction 3-deoxy-alpha-D-manno-oct-2-ulosonate + CTP = CMP-3-deoxy-beta-D-manno-octulosonate + diphosphate. Its pathway is nucleotide-sugar biosynthesis; CMP-3-deoxy-D-manno-octulosonate biosynthesis; CMP-3-deoxy-D-manno-octulosonate from 3-deoxy-D-manno-octulosonate and CTP: step 1/1. The protein operates within bacterial outer membrane biogenesis; lipopolysaccharide biosynthesis. In terms of biological role, activates KDO (a required 8-carbon sugar) for incorporation into bacterial lipopolysaccharide in Gram-negative bacteria. In Yersinia enterocolitica serotype O:8 / biotype 1B (strain NCTC 13174 / 8081), this protein is 3-deoxy-manno-octulosonate cytidylyltransferase.